The chain runs to 89 residues: MALTAEQKKEILNSYGLHETDTGSPEAQIALLTKRISDLTEHLKVHKHDHHSRRGLLLLVGRRRRLIKYISQIDVQRYRSLIERLGLRR.

Belongs to the universal ribosomal protein uS15 family. In terms of assembly, part of the 30S ribosomal subunit. Forms a bridge to the 50S subunit in the 70S ribosome, contacting the 23S rRNA.

Functionally, one of the primary rRNA binding proteins, it binds directly to 16S rRNA where it helps nucleate assembly of the platform of the 30S subunit by binding and bridging several RNA helices of the 16S rRNA. Its function is as follows. Forms an intersubunit bridge (bridge B4) with the 23S rRNA of the 50S subunit in the ribosome. In Mycobacterium marinum (strain ATCC BAA-535 / M), this protein is Small ribosomal subunit protein uS15.